The primary structure comprises 270 residues: Tetraspanin-2 (270 aa).

Over 1-8 (MALANNLT) the chain is Cytoplasmic. The helical transmembrane segment at 9-29 (AILNLLALLCSIPITASGIWL) threads the bilayer. The Extracellular portion of the chain corresponds to 30–42 (ASKPDNECVNLLR). A helical transmembrane segment spans residues 43-63 (WPVVVLGVLILVVSATGFIGA). Residues 64-74 (YKYKETLLAVY) lie on the Cytoplasmic side of the membrane. Residues 75–95 (LCCMAILIGLLLVVLIFAFVV) form a helical membrane-spanning segment. Residues 96–232 (TRPDGSYRVP…NLRKEWRKAN (137 aa)) are Extracellular-facing. Residues 233 to 253 (LILIITVVVLIWVYVIACSAF) form a helical membrane-spanning segment. Residues 254–270 (RNAQTEDLFRKYKQGWV) are Cytoplasmic-facing.

This sequence belongs to the tetraspanin (TM4SF) family.

Its subcellular location is the membrane. In terms of biological role, may be involved in the regulation of cell differentiation. The sequence is that of Tetraspanin-2 (TET2) from Arabidopsis thaliana (Mouse-ear cress).